Reading from the N-terminus, the 270-residue chain is Acyl-[acyl-carrier-protein]--UDP-N-acetylglucosamine O-acyltransferase (270 aa).

This sequence belongs to the transferase hexapeptide repeat family. LpxA subfamily. Homotrimer.

It localises to the cytoplasm. The enzyme catalyses a (3R)-hydroxyacyl-[ACP] + UDP-N-acetyl-alpha-D-glucosamine = a UDP-3-O-[(3R)-3-hydroxyacyl]-N-acetyl-alpha-D-glucosamine + holo-[ACP]. It participates in glycolipid biosynthesis; lipid IV(A) biosynthesis; lipid IV(A) from (3R)-3-hydroxytetradecanoyl-[acyl-carrier-protein] and UDP-N-acetyl-alpha-D-glucosamine: step 1/6. Involved in the biosynthesis of lipid A, a phosphorylated glycolipid that anchors the lipopolysaccharide to the outer membrane of the cell. The chain is Acyl-[acyl-carrier-protein]--UDP-N-acetylglucosamine O-acyltransferase from Helicobacter pylori (strain P12).